The chain runs to 258 residues: Neurotrophin-3 (258 aa).

The first 18 residues, 1-18 (MSILFYVIFLAYLRGIQG), serve as a signal peptide directing secretion. A propeptide spanning residues 19-139 (NNMDQRSLPE…TNRTSPRRKR (121 aa)) is cleaved from the precursor. The interval 60–85 (QSTLPKAEAPREPEQGEATRSEFQPM) is disordered. Positions 67 to 79 (EAPREPEQGEATR) are enriched in basic and acidic residues. N-linked (GlcNAc...) asparagine glycosylation occurs at Asn131. 3 cysteine pairs are disulfide-bonded: Cys153/Cys218, Cys196/Cys247, and Cys206/Cys249.

The protein belongs to the NGF-beta family. In terms of tissue distribution, brain and peripheral tissues.

The protein localises to the secreted. Seems to promote the survival of visceral and proprioceptive sensory neurons. The chain is Neurotrophin-3 (Ntf3) from Rattus norvegicus (Rat).